A 263-amino-acid polypeptide reads, in one-letter code: Receptor-transporting protein 1 (263 aa).

Residues 1–238 are Cytoplasmic-facing; the sequence is MRIFRPWRLR…ETGSGWNFCS (238 aa). A 3CxxC-type zinc finger spans residues 88–197; the sequence is ASGRFHCSWC…GEFCEACQEG (110 aa). Residues 239–259 traverse the membrane as a helical segment; that stretch reads IPWCLFWATVLLLIIYLQLSF. Residues 260-263 are Extracellular-facing; that stretch reads RSSV.

This sequence belongs to the TMEM7 family. As to quaternary structure, interacts with olfactory receptors.

It is found in the cell membrane. Specifically promotes functional cell surface expression of olfactory receptors, but not of other GPCRs. This Macaca fascicularis (Crab-eating macaque) protein is Receptor-transporting protein 1 (RTP1).